The primary structure comprises 482 residues: Coagulation factor X (482 aa).

Residues 1–20 form the signal peptide; that stretch reads MESPVRLSLLYVVLASLLLP. The propeptide occupies 21 to 40; that stretch reads GRSVFINRERANNVLQRIRR. Residues 41-85 form the Gla domain; it reads ANSFFEEIKKGNLERECVEEICSFEEAREVFEDNEKTTEFWNKYE. Residues E46, E47, E54, E56, E59, E60, E65, E66, E69, E72, E75, and E79 each carry the 4-carboxyglutamate modification. C57 and C62 form a disulfide bridge. The EGF-like 1; calcium-binding domain maps to 86–122; the sequence is DGDQCESSPCQNQGECRDGLGSYTCTCTEGFEGKNCE. Intrachain disulfides connect C90-C101, C95-C110, C112-C121, C129-C140, C136-C149, C151-C164, C172-C340, C238-C243, C259-C275, C388-C402, and C413-C441. D103 bears the (3R)-3-hydroxyaspartate mark. One can recognise an EGF-like 2 domain in the interval 125-165; sequence VRKLCSLDNGDCDQFCREEQNSVVCSCAKGYFLGNDGKSCL. Positions 184–231 are cleaved as a propeptide — activation peptide; sequence VALNTSNSEPDPEDLMPDADILYPTESPSELLNLNKTEPEANSDDVIR. Residues N187 and N218 are each glycosylated (N-linked (GlcNAc...) asparagine). The 234-residue stretch at 232–465 folds into the Peptidase S1 domain; that stretch reads IVGGQECKRG…FLKWIDRSMK (234 aa). Active-site charge relay system residues include H274 and D320. Residue S417 is the Charge relay system of the active site.

Belongs to the peptidase S1 family. As to quaternary structure, the two chains are formed from a single-chain precursor by the excision of two Arg residues and are held together by 1 or more disulfide bonds. Forms a heterodimer with SERPINA5. Interacts with ixolaris, an anticoagulant protein from Ixodes scapularis saliva. Post-translationally, the vitamin K-dependent, enzymatic carboxylation of some glutamate residues allows the modified protein to bind calcium. N- and O-glycosylated. In terms of processing, proteolytically cleaved and activated by cathepsin CTSG. The activation peptide is cleaved by factor IXa (in the intrinsic pathway), or by factor VIIa (in the extrinsic pathway). Post-translationally, the iron and 2-oxoglutarate dependent 3-hydroxylation of aspartate and asparagine is (R) stereospecific within EGF domains. As to expression, plasma; synthesized in the liver.

It localises to the secreted. The enzyme catalyses Selective cleavage of Arg-|-Thr and then Arg-|-Ile bonds in prothrombin to form thrombin.. Its activity is regulated as follows. Inhibited by SERPINA5. Functionally, factor Xa is a vitamin K-dependent glycoprotein that converts prothrombin to thrombin in the presence of factor Va, calcium and phospholipid during blood clotting. Factor Xa activates pro-inflammatory signaling pathways in a protease-activated receptor (PAR)-dependent manner. In Rattus norvegicus (Rat), this protein is Coagulation factor X (F10).